Reading from the N-terminus, the 295-residue chain is UDP-N-acetylenolpyruvoylglucosamine reductase (295 aa).

The 166-residue stretch at 23–188 (QVGGPADFLA…ISAKFALKPG (166 aa)) folds into the FAD-binding PCMH-type domain. Arg167 is a catalytic residue. Residue Ser217 is the Proton donor of the active site. Residue Glu287 is part of the active site.

The protein belongs to the MurB family. The cofactor is FAD.

The protein localises to the cytoplasm. It catalyses the reaction UDP-N-acetyl-alpha-D-muramate + NADP(+) = UDP-N-acetyl-3-O-(1-carboxyvinyl)-alpha-D-glucosamine + NADPH + H(+). Its pathway is cell wall biogenesis; peptidoglycan biosynthesis. Functionally, cell wall formation. In Streptococcus equi subsp. zooepidemicus (strain H70), this protein is UDP-N-acetylenolpyruvoylglucosamine reductase.